Here is a 797-residue protein sequence, read N- to C-terminus: G-patch domain-containing protein C1486.03 (797 aa).

Positions 1–12 are enriched in polar residues; it reads MQNEYVDMNSSS. 2 disordered regions span residues 1 to 33 and 159 to 204; these read MQNEYVDMNSSSEDSDGDSILEEGRLRPSFRGQ and VRER…SSEE. A G-patch domain is found at 115-161; that stretch reads TTGFGAKMLEKMGYKQGQGLGANAEGIAEPVQSKLRPERVGLGAVRE. Over residues 159–185 the composition is skewed to basic and acidic residues; it reads VRERTEKQRKEAIARGEISDSEDEKHT. Over residues 186–199 the composition is skewed to basic residues; that stretch reads VKQKPLREKKKKPL.

Belongs to the TFP11/STIP family.

It localises to the cytoplasm. The protein localises to the cytoskeleton. The protein resides in the microtubule organizing center. It is found in the spindle pole body. The polypeptide is G-patch domain-containing protein C1486.03 (Schizosaccharomyces pombe (strain 972 / ATCC 24843) (Fission yeast)).